A 164-amino-acid chain; its full sequence is Transcription antitermination protein NusB (164 aa).

It belongs to the NusB family.

Involved in transcription antitermination. Required for transcription of ribosomal RNA (rRNA) genes. Binds specifically to the boxA antiterminator sequence of the ribosomal RNA (rrn) operons. The chain is Transcription antitermination protein NusB from Chlamydia muridarum (strain MoPn / Nigg).